The following is a 574-amino-acid chain: Kelch-like protein 35 (574 aa).

The 71-residue stretch at 40-110 (TDVVLRAGGR…VYGAGVRLRA (71 aa)) folds into the BTB domain. The BACK domain maps to 146-248 (SLALRRVAAA…APAYFLEKVE (103 aa)). 6 Kelch repeats span residues 292–341 (VIVV…ALRN), 343–385 (IYVS…ALQG), 386–432 (QLFA…PCAG), 434–480 (LYVI…SLED), 481–522 (TIYV…VCDG), and 524–570 (VHIL…TIVQ).

This chain is Kelch-like protein 35 (Klhl35), found in Mus musculus (Mouse).